The primary structure comprises 358 residues: RuBisCO accumulation factor 1 (358 aa).

The tract at residues 11 to 194 (VSAAEAAELI…RQAIEKLLTD (184 aa)) is N-terminal alpha-helix. Residues 218–344 (ARLIPVAGTF…VVLVLRPKKI (127 aa)) form a C-terminal beta-sheet region.

The protein belongs to the RAF family. In terms of assembly, homodimer. Forms an RbcL(8)-Raf1(8) complex. Forms complexes of many stoichiometries with RbcL with and without RbcS. RbcX and Raf1 can bind simultaneously to RbcL. Interacts with both RuBisCO subunits (ccbL, ccbS), GroEL, DnaK and alpha and beta phycocyanin (cpcA, cpcB) in pull-down experiments with tagged protein. C-terminally tagged Raf1 does not interact with either RuBisCO subunit, suggesting its C-terminus is involved in binding.

The protein localises to the cytoplasm. A major RuBisCO chaperone. Acts after GroEL-GroES chaperonin to fold and/or assemble the large subunit of RuBisCO (ccbL, rbcL). Cooperates with RbcX in RbcL folding, plays the major role in assembly of dimers into RbcL(8)-Raf1(8) intermediate complexes. RbcS replaces Raf1, leading to holoenzyme formation. Functionally, required for optimal reconstitution of RbcL(8) upon expression in E.coli. Has been suggested to be involved in RuBisCO recycling and homeostasis rather than assembly. In Synechocystis sp. (strain ATCC 27184 / PCC 6803 / Kazusa), this protein is RuBisCO accumulation factor 1.